Consider the following 539-residue polypeptide: Chaperonin GroEL (539 aa).

Residues 29 to 32 (TLGP), 86 to 90 (DGTTT), Gly413, 479 to 481 (DAL), and Asp495 each bind ATP.

Belongs to the chaperonin (HSP60) family. As to quaternary structure, forms a cylinder of 14 subunits composed of two heptameric rings stacked back-to-back. Interacts with the co-chaperonin GroES.

Its subcellular location is the cytoplasm. The catalysed reaction is ATP + H2O + a folded polypeptide = ADP + phosphate + an unfolded polypeptide.. Functionally, together with its co-chaperonin GroES, plays an essential role in assisting protein folding. The GroEL-GroES system forms a nano-cage that allows encapsulation of the non-native substrate proteins and provides a physical environment optimized to promote and accelerate protein folding. The sequence is that of Chaperonin GroEL from Pseudothermotoga lettingae (strain ATCC BAA-301 / DSM 14385 / NBRC 107922 / TMO) (Thermotoga lettingae).